We begin with the raw amino-acid sequence, 930 residues long: Type I restriction enzyme SsaAORF53P endonuclease subunit (930 aa).

Residues 254 to 418 (HQATETSNNG…DGRSTADIFG (165 aa)) enclose the Helicase ATP-binding domain. An ATP-binding site is contributed by 268 to 274 (TTGSGKT).

This sequence belongs to the HsdR family. The type I restriction/modification system is composed of three polypeptides R, M and S.

The enzyme catalyses Endonucleolytic cleavage of DNA to give random double-stranded fragments with terminal 5'-phosphates, ATP is simultaneously hydrolyzed.. Functionally, the restriction (R) subunit of a type I restriction enzyme that recognizes an undetermined sequence and cleaves a random distance away. Subunit R is required for both nuclease and ATPase activities, but not for modification. After locating a non-methylated recognition site, the enzyme complex serves as a molecular motor that translocates DNA in an ATP-dependent manner until a collision occurs that triggers cleavage. This chain is Type I restriction enzyme SsaAORF53P endonuclease subunit, found in Staphylococcus saprophyticus subsp. saprophyticus (strain ATCC 15305 / DSM 20229 / NCIMB 8711 / NCTC 7292 / S-41).